Reading from the N-terminus, the 366-residue chain is uncharacterized protein (366 aa).

Residues 1 to 135 (MNQTGRTIGG…PPKNVDTIDK (135 aa)) form a disordered region. Basic and acidic residues predominate over residues 26 to 38 (PSEDRVSSRDETP). Phosphoserine is present on serine 69. Threonine 76 carries the post-translational modification Phosphothreonine. A Glycyl lysine isopeptide (Lys-Gly) (interchain with G-Cter in ubiquitin) cross-link involves residue lysine 78. The segment covering 97 to 108 (QHNHHHHRRTSH) has biased composition (basic residues). Lysine 187 participates in a covalent cross-link: Glycyl lysine isopeptide (Lys-Gly) (interchain with G-Cter in ubiquitin). The residue at position 189 (threonine 189) is a Phosphothreonine. A Glycyl lysine isopeptide (Lys-Gly) (interchain with G-Cter in ubiquitin) cross-link involves residue lysine 242. Phosphoserine occurs at positions 288 and 294. A disordered region spans residues 313–366 (THSGHLEQKDVDDNRTSVPVTATQGSGHEDVVKKENTGNKLLRRVKSLKTSKKH). The segment covering 316 to 327 (GHLEQKDVDDNR) has biased composition (basic and acidic residues). Residues 328 to 338 (TSVPVTATQGS) are compositionally biased toward polar residues. Over residues 339-349 (GHEDVVKKENT) the composition is skewed to basic and acidic residues. The span at 353 to 366 (LLRRVKSLKTSKKH) shows a compositional bias: basic residues. Serine 359 carries the post-translational modification Phosphoserine.

Belongs to the pal1 family.

Its subcellular location is the cytoplasm. It localises to the nucleus. This is an uncharacterized protein from Saccharomyces cerevisiae (strain ATCC 204508 / S288c) (Baker's yeast).